Here is a 330-residue protein sequence, read N- to C-terminus: Complement factor H-related protein 3 (330 aa).

Residues 1 to 18 (MLLLINVILTLWVSCANG) form the signal peptide. Sushi domains follow at residues 22–84 (PCDF…VPCL), 85–142 (RKCY…RCIR), 144–205 (RTCS…ICIN), 208–266 (EKCG…RCIH), and 267–330 (PCII…PRCE). Cystine bridges form between C23/C72, C55/C83, C87/C129, C114/C140, C146/C192, and C175/C203. An N-linked (GlcNAc...) asparagine glycan is attached at N108. Residues N185 and N205 are each glycosylated (N-linked (GlcNAc...) asparagine). Disulfide bonds link C210–C253, C239–C264, C268–C319, and C302–C329. The N-linked (GlcNAc...) asparagine glycan is linked to N309.

In terms of tissue distribution, expressed by the liver and secreted in plasma.

The protein resides in the secreted. In terms of biological role, might be involved in complement regulation. In Homo sapiens (Human), this protein is Complement factor H-related protein 3 (CFHR3).